We begin with the raw amino-acid sequence, 383 residues long: tRNA-specific 2-thiouridylase MnmA (383 aa).

Residues 11 to 18 (GLSGGVDS) and M37 each bind ATP. An interaction with target base in tRNA region spans residues 97-99 (NPD). Residue C102 is the Nucleophile of the active site. C102 and C200 form a disulfide bridge. G127 is a binding site for ATP. Residues 150–152 (KDQ) form an interaction with tRNA region. C200 acts as the Cysteine persulfide intermediate in catalysis. The interaction with tRNA stretch occupies residues 312-313 (RY). The segment at 361–383 (IDTAHPADRSAPPALQTQSTEVV) is disordered.

This sequence belongs to the MnmA/TRMU family.

Its subcellular location is the cytoplasm. The catalysed reaction is S-sulfanyl-L-cysteinyl-[protein] + uridine(34) in tRNA + AH2 + ATP = 2-thiouridine(34) in tRNA + L-cysteinyl-[protein] + A + AMP + diphosphate + H(+). Catalyzes the 2-thiolation of uridine at the wobble position (U34) of tRNA, leading to the formation of s(2)U34. In Halorhodospira halophila (strain DSM 244 / SL1) (Ectothiorhodospira halophila (strain DSM 244 / SL1)), this protein is tRNA-specific 2-thiouridylase MnmA.